We begin with the raw amino-acid sequence, 105 residues long: N(4)-acetylcytidine amidohydrolase (105 aa).

The region spanning 7 to 93 is the ASCH domain; that stretch reads TFFERFEHDI…VIAEIYPGLE (87 aa). K21 functions as the Proton acceptor in the catalytic mechanism. Residue T24 is the Nucleophile of the active site. Catalysis depends on E74, which acts as the Proton donor.

The protein belongs to the N(4)-acetylcytidine amidohydrolase family.

It carries out the reaction N(4)-acetylcytidine + H2O = cytidine + acetate + H(+). It catalyses the reaction N(4)-acetyl-2'-deoxycytidine + H2O = 2'-deoxycytidine + acetate + H(+). The enzyme catalyses N(4)-acetylcytosine + H2O = cytosine + acetate + H(+). Functionally, catalyzes the hydrolysis of N(4)-acetylcytidine (ac4C). The protein is N(4)-acetylcytidine amidohydrolase of Shewanella baltica (strain OS155 / ATCC BAA-1091).